The sequence spans 833 residues: Leucine--tRNA ligase (833 aa).

The 'HIGH' region signature appears at 41 to 52 (PYPSGAGLHVGH). The 'KMSKS' region signature appears at 610–614 (KMSKS). An ATP-binding site is contributed by Lys613.

The protein belongs to the class-I aminoacyl-tRNA synthetase family.

It localises to the cytoplasm. It carries out the reaction tRNA(Leu) + L-leucine + ATP = L-leucyl-tRNA(Leu) + AMP + diphosphate. The polypeptide is Leucine--tRNA ligase (Streptococcus agalactiae serotype Ia (strain ATCC 27591 / A909 / CDC SS700)).